Consider the following 575-residue polypeptide: Arginine--tRNA ligase (575 aa).

The short motif at A136–H146 is the 'HIGH' region element.

The protein belongs to the class-I aminoacyl-tRNA synthetase family. In terms of assembly, monomer.

It is found in the cytoplasm. It catalyses the reaction tRNA(Arg) + L-arginine + ATP = L-arginyl-tRNA(Arg) + AMP + diphosphate. The polypeptide is Arginine--tRNA ligase (Polynucleobacter necessarius subsp. necessarius (strain STIR1)).